Reading from the N-terminus, the 307-residue chain is Ribosomal protein L11 methyltransferase (307 aa).

Residues T156, G177, D199, and N243 each contribute to the S-adenosyl-L-methionine site.

Belongs to the methyltransferase superfamily. PrmA family.

It is found in the cytoplasm. It catalyses the reaction L-lysyl-[protein] + 3 S-adenosyl-L-methionine = N(6),N(6),N(6)-trimethyl-L-lysyl-[protein] + 3 S-adenosyl-L-homocysteine + 3 H(+). Its function is as follows. Methylates ribosomal protein L11. The sequence is that of Ribosomal protein L11 methyltransferase from Syntrophomonas wolfei subsp. wolfei (strain DSM 2245B / Goettingen).